Consider the following 717-residue polypeptide: Delta-like protein D (717 aa).

The signal sequence occupies residues 1–19; sequence MGRLMIAVLLCVMISQGFC. Topologically, residues 20–547 are extracellular; it reads SGVFELKLQE…EEDDGGFPWT (528 aa). Positions 175-219 constitute a DSL domain; the sequence is FVCDEHYYGEGCSVFCRPRDDTFGHFTCGERGEIICNSGWKGQYC. 26 disulfide bridges follow: Cys-177–Cys-186, Cys-190–Cys-202, Cys-210–Cys-219, Cys-224–Cys-235, Cys-228–Cys-241, Cys-243–Cys-252, Cys-261–Cys-266, Cys-274–Cys-283, Cys-290–Cys-302, Cys-296–Cys-312, Cys-314–Cys-323, Cys-330–Cys-341, Cys-335–Cys-350, Cys-352–Cys-361, Cys-368–Cys-379, Cys-373–Cys-389, Cys-391–Cys-400, Cys-407–Cys-418, Cys-412–Cys-427, Cys-429–Cys-438, Cys-445–Cys-456, Cys-450–Cys-465, Cys-467–Cys-476, Cys-483–Cys-494, Cys-488–Cys-503, and Cys-505–Cys-514. EGF-like domains lie at 220–253, 257–284, and 286–324; these read TEPI…KYCD, RYPG…LFCN, and DLNY…DSCE. The 37-residue stretch at 326 to 362 folds into the EGF-like 4; calcium-binding domain; that stretch reads EVNECSGSPCRNGGSCTDLENTYSCTCPPGFYGRNCE. 2 consecutive EGF-like domains span residues 364–401 and 403–439; these read SAMT…FNCE and KIDH…THCE. Residues 441-477 form the EGF-like 7; calcium-binding domain; the sequence is NIDECATYPCQNGGTCQDGLSDYTCTCPPGYTGKNCT. Asn-475 is a glycosylation site (N-linked (GlcNAc...) asparagine). The 37-residue stretch at 479–515 folds into the EGF-like 8 domain; the sequence is AVNKCLHNPCHNGATCHEMDNRYVCACIPGYGGRNCQ. A helical membrane pass occupies residues 548–568; sequence AVCAGIILVLLVLIGGSVFVI. Residues 569–717 are Cytoplasmic-facing; sequence YIRLKLQQRS…KDECIIATEV (149 aa). A disordered region spans residues 649–693; it reads EDLGKEDSERSEATKCEPLDSDSEEKHRNHLKSDSSERKRTESLC.

Interacts with mib. Post-translationally, ubiquitinated by mib, leading to its endocytosis and subsequent degradation. Expressed in both mesodermal and neuroectodermal regions. In the developing nervous system, it is expressed in overlapping regions with deltaB (dlb) and deltaA (dla); in the neural plate, dld is expressed in patches of contiguous cells with dla, while dlb is confined to scattered cells within those patches that will differentiate as neurons. In somites, it marks the anterior part of each formed somite, while deltaC (dlc) marks the posterior part. In 24 hours embryos, expressed in the hindbrain in stripes adjacent to rhombomere boundaries, but not in the actual boundary cells.

Its subcellular location is the membrane. Functionally, acts as a ligand for Notch receptors and is involved in primary neurogenesis and somitogenesis. Can activate Notch receptors, thereby playing a key role in lateral inhibition, a process that prevents the immediate neighbors of each nascent neural cell from simultaneously embarking on neural differentiation. Required in somite segmentation to keep the oscillations of neighboring presomitic mesoderm cells synchronized. The chain is Delta-like protein D (dld) from Danio rerio (Zebrafish).